The following is an 892-amino-acid chain: DNA mismatch repair protein MutS (892 aa).

Residue 607-614 (GPNMSGKS) coordinates ATP.

Belongs to the DNA mismatch repair MutS family.

This protein is involved in the repair of mismatches in DNA. It is possible that it carries out the mismatch recognition step. This protein has a weak ATPase activity. The protein is DNA mismatch repair protein MutS of Bacillus cereus (strain AH820).